We begin with the raw amino-acid sequence, 274 residues long: Protein YehF (274 aa).

A WGR domain is found at 2–78; sequence RHFIYQDEKS…KDNSLQPSQT (77 aa).

Has been implicated in selenate reduction; a mini-Tn10 insertion mutant in 'molR', (which was mapped to 47.3 centisomes i.e. this locus), is defective in the reduction of selenate. This chain is Protein YehF (yehF), found in Escherichia coli (strain K12).